Here is a 414-residue protein sequence, read N- to C-terminus: MKKIAYLECPTGIAGDMCLGALIDGGVPLEYLKNQLNRLGIAAEYDLRAETVIRQGQRATKVFVDLKTKATHHDHDHSQDQTHHHHADHAPHRHLPEIQAMIKGAGLPERVERWSLAIFQNLAIAEATVHGTTPEQVHFHEVGATDALVDIVGTCLGLDWLEIDELYCAPMPTGGGTVKAAHGILPVPVPAVLQLWQQRQVPVYSNGIEKELVTPTGAAIATTLATDFCQPPAMTLAKIALGSGTIDLPLPNLLRLWIGHQPETPHLETIVTLETQIDDLNPQAIAYACEKLQAAGALDVFTQGITMKKNRLGTLLTVICPVALVEICEEILFTETSTLGIRRHTQTRSILQRRFETVATPAGEIQLKIGYRGDKIYNVQPEYEDVKAIAQQTGQSWQAIAQQALCQFPRDAES.

Positions 70-91 are disordered; the sequence is ATHHDHDHSQDQTHHHHADHAP.

Belongs to the LarC family.

The polypeptide is Putative nickel insertion protein (Picosynechococcus sp. (strain ATCC 27264 / PCC 7002 / PR-6) (Agmenellum quadruplicatum)).